The chain runs to 392 residues: Acyl-CoA dehydrogenase IpdE1 (392 aa).

FAD contacts are provided by residues 126-129 (QGYS) and S171. E254 (proton acceptor) is an active-site residue. Residue 371 to 373 (SNE) coordinates FAD.

Belongs to the acyl-CoA dehydrogenase family. As to quaternary structure, heterotetramer composed of 2 IpdE1 subunits and 2 IpdE2 subunits. Requires FAD as cofactor.

The catalysed reaction is 3-[(3aS,4S,5R,7aS)-5-hydroxy-7a-methyl-1-oxo-octahydro-1H-inden-4-yl]propanoyl-CoA + A = (2E)-3-[(3aS,4S,5R,7aS)-5-hydroxy-7a-methyl-1-oxo-octahydro-1H-inden-4-yl]prop-2-enoyl-CoA + AH2. It participates in steroid metabolism; cholesterol degradation. Its function is as follows. Involved in cholesterol degradation. Catalyzes the dehydrogenation of 5OH-HIP-CoA to 5OH-HIPE-CoA. The protein is Acyl-CoA dehydrogenase IpdE1 of Mycolicibacterium smegmatis (strain ATCC 700084 / mc(2)155) (Mycobacterium smegmatis).